A 203-amino-acid polypeptide reads, in one-letter code: Ribonuclease HII (203 aa).

In terms of domain architecture, RNase H type-2 spans 15 to 201 (LLVAGLDEAG…VAQAPLRFPE (187 aa)). A divalent metal cation-binding residues include aspartate 21, glutamate 22, and aspartate 111.

This sequence belongs to the RNase HII family. Mn(2+) serves as cofactor. It depends on Mg(2+) as a cofactor.

It localises to the cytoplasm. It catalyses the reaction Endonucleolytic cleavage to 5'-phosphomonoester.. Its function is as follows. Endonuclease that specifically degrades the RNA of RNA-DNA hybrids. The protein is Ribonuclease HII of Thermus thermophilus (strain ATCC BAA-163 / DSM 7039 / HB27).